An 841-amino-acid chain; its full sequence is SLIT and NTRK-like protein 6 (841 aa).

Positions 1–26 (MKLWIHLFYSSLLACISLHSQTPVLS) are cleaved as a signal peptide. An LRRNT 1 domain is found at 27–67 (SRGSCDSLCNCEEKDGTMLINCEAKGIKMVSEISVPPSRPF). At 27–608 (SRGSCDSLCN…RSLTDAVPLS (582 aa)) the chain is on the extracellular side. LRR repeat units follow at residues 89-110 (NAIS…AFNG), 113-134 (LLKQ…TFHG), 137-158 (NLEF…AFSK), 161-182 (RLKV…IFRF), and 184-205 (PLTH…GFLE). The LRRCT 1 domain maps to 218 to 269 (NKWACNCDLLQLKTWLENMPPQSIIGDVVCNSPPFFKGSILSRLKKESICPT). In terms of domain architecture, LRRNT 2 spans 320-361 (PSTQLPGPYCPIPCNCKVLSPSGLLIHCQERNIESLSDLRPP). LRR repeat units follow at residues 364–385 (NPRK…DLVE), 388–409 (TLEM…SFMN), 412–433 (RLQK…MFLG), 436–457 (NLEY…TFNP), 460–481 (KLKV…IFSG), and 483–504 (PLTK…NILD). An LRRCT 2 domain is found at 517 to 568 (NPWDCSCDLVGLQQWIQKLSKNTVTDDILCTSPGHLDKKELKALNSEILCPG). The chain crosses the membrane as a helical span at residues 609–629 (VLILGLLIMFITIVFCAAGIV). Residues 630–841 (VLVLHRRRRY…DYLEVLEQQT (212 aa)) are Cytoplasmic-facing.

It belongs to the SLITRK family. As to expression, in adult brain, highly expressed in putamen with no expression in cerebral cortex. Expressed in adult and fetal lung and fetal liver. Also expressed at high levels in some brain tumors including medulloblastomas and primitive neuroectodermal tumors.

It is found in the cell membrane. Regulator of neurite outgrowth required for normal hearing and vision. The sequence is that of SLIT and NTRK-like protein 6 (SLITRK6) from Homo sapiens (Human).